The primary structure comprises 307 residues: Mycothiol acetyltransferase (307 aa).

N-acetyltransferase domains lie at 15–158 (HTLD…LAEP) and 164–307 (VTVR…RTES). Glu46 serves as a coordination point for 1D-myo-inositol 2-(L-cysteinylamino)-2-deoxy-alpha-D-glucopyranoside. 90–92 (LVV) lines the acetyl-CoA pocket. The 1D-myo-inositol 2-(L-cysteinylamino)-2-deoxy-alpha-D-glucopyranoside site is built by Glu191, Lys230, and Glu239. Acetyl-CoA contacts are provided by residues 243-245 (VGV) and 250-256 (QGGGLGK). 1D-myo-inositol 2-(L-cysteinylamino)-2-deoxy-alpha-D-glucopyranoside is bound at residue Tyr277.

This sequence belongs to the acetyltransferase family. MshD subfamily. In terms of assembly, monomer.

The enzyme catalyses 1D-myo-inositol 2-(L-cysteinylamino)-2-deoxy-alpha-D-glucopyranoside + acetyl-CoA = mycothiol + CoA + H(+). In terms of biological role, catalyzes the transfer of acetyl from acetyl-CoA to desacetylmycothiol (Cys-GlcN-Ins) to form mycothiol. The sequence is that of Mycothiol acetyltransferase from Streptomyces griseus subsp. griseus (strain JCM 4626 / CBS 651.72 / NBRC 13350 / KCC S-0626 / ISP 5235).